The following is a 329-amino-acid chain: tRNA pseudouridine synthase B (329 aa).

The active-site Nucleophile is aspartate 42.

It belongs to the pseudouridine synthase TruB family. Type 1 subfamily.

It carries out the reaction uridine(55) in tRNA = pseudouridine(55) in tRNA. In terms of biological role, responsible for synthesis of pseudouridine from uracil-55 in the psi GC loop of transfer RNAs. The sequence is that of tRNA pseudouridine synthase B from Lactococcus lactis subsp. lactis (strain IL1403) (Streptococcus lactis).